We begin with the raw amino-acid sequence, 471 residues long: UDP-glycosyltransferase 71A15 (471 aa).

Residues Ser282, 348–349 (WA), 366–374 (HCGWNSTLE), and 388–391 (YAEQ) each bind UDP-alpha-D-glucose.

It belongs to the UDP-glycosyltransferase family.

Glycosyltransferase that possesses chalcone and flavonol 2'-O-glycosyltransferase activity. Converts phloretin to phlorizin (phloretin 2'-O-glucoside), a potent antioxidant. Possesses glycosyltransferase activity toward, naringenin, naringenin chalcone, eriodictyol, eriodictyol chalcone, apigenin, luteolin, kaempferol, quercetin, isoliquiritigenin, butein and caffeic acid. Can convert phloretin to phloretin 4'-O-glucoside and phloretin 4-O-glucoside. The polypeptide is UDP-glycosyltransferase 71A15 (Malus domestica (Apple)).